Here is a 352-residue protein sequence, read N- to C-terminus: Biotin synthase (352 aa).

A Radical SAM core domain is found at 44–262 (NRVQVSTLLS…LAVARIMMPK (219 aa)). [4Fe-4S] cluster-binding residues include cysteine 59, cysteine 63, and cysteine 66. Residues cysteine 103, cysteine 134, cysteine 194, and arginine 266 each contribute to the [2Fe-2S] cluster site.

The protein belongs to the radical SAM superfamily. Biotin synthase family. As to quaternary structure, homodimer. [4Fe-4S] cluster is required as a cofactor. [2Fe-2S] cluster serves as cofactor.

It catalyses the reaction (4R,5S)-dethiobiotin + (sulfur carrier)-SH + 2 reduced [2Fe-2S]-[ferredoxin] + 2 S-adenosyl-L-methionine = (sulfur carrier)-H + biotin + 2 5'-deoxyadenosine + 2 L-methionine + 2 oxidized [2Fe-2S]-[ferredoxin]. It functions in the pathway cofactor biosynthesis; biotin biosynthesis; biotin from 7,8-diaminononanoate: step 2/2. Catalyzes the conversion of dethiobiotin (DTB) to biotin by the insertion of a sulfur atom into dethiobiotin via a radical-based mechanism. This chain is Biotin synthase, found in Ectopseudomonas mendocina (strain ymp) (Pseudomonas mendocina).